A 228-amino-acid polypeptide reads, in one-letter code: Sodium channel regulatory subunit beta-4 (228 aa).

The signal sequence occupies residues 1–30 (MPGARDQGAARARWLGIGLLGLFLLPVSLS). The 118-residue stretch at 31 to 148 (LEVSVGKATT…NDFQHQATIF (118 aa)) folds into the Ig-like C2-type domain. The Extracellular portion of the chain corresponds to 31–162 (LEVSVGKATT…DKLEEVDNTV (132 aa)). N-linked (GlcNAc...) asparagine glycans are attached at residues N45, N71, and N113. A disulfide bridge links C53 with C131. Residues 163-183 (TLIILGVVGGVIGLLIFILLV) form a helical membrane-spanning segment. The Cytoplasmic portion of the chain corresponds to 184–228 (KKFIAFIIKKTQEKKKECLVSSSGNDNTENGLPGSKAEEKAPTKV). Residues 198–228 (KKECLVSSSGNDNTENGLPGSKAEEKAPTKV) form a disordered region. Over residues 203 to 213 (VSSSGNDNTEN) the composition is skewed to polar residues. Positions 219–228 (KAEEKAPTKV) are enriched in basic and acidic residues.

Belongs to the sodium channel auxiliary subunit SCN4B (TC 8.A.17) family. As to quaternary structure, a voltage-gated sodium (Nav) channel consists of an ion-conducting pore-forming alpha subunit functional on its own that is regulated by one or more beta subunits. The beta subunit SCN4B is disulfide-linked to the pore-forming alpha subunit. Interacts with SCN1A; regulatory subunit of SCN1A/Nav1.1. Interacts with SCN2A; regulatory subunit of SCN2A/Nav1.2. Post-translationally, contains an interchain disulfide bond with SCN2A.

It localises to the cell membrane. In terms of biological role, regulatory subunit of multiple voltage-gated sodium (Nav) channels directly mediating the depolarization of excitable membranes. Navs, also called VGSCs (voltage-gated sodium channels) or VDSCs (voltage-dependent sodium channels), operate by switching between closed and open conformations depending on the voltage difference across the membrane. In the open conformation they allow Na(+) ions to selectively pass through the pore, along their electrochemical gradient. The influx of Na+ ions provokes membrane depolarization, initiating the propagation of electrical signals throughout cells and tissues. The accessory beta subunits participate in localization and functional modulation of the Nav channels. Modulates the activity of SCN1A/Nav1.1. Modulates the activity of SCN2A/Nav1.2. This Bos taurus (Bovine) protein is Sodium channel regulatory subunit beta-4.